The sequence spans 99 residues: Large ribosomal subunit protein uL23 (99 aa).

It belongs to the universal ribosomal protein uL23 family. In terms of assembly, part of the 50S ribosomal subunit. Contacts protein L29, and trigger factor when it is bound to the ribosome.

In terms of biological role, one of the early assembly proteins it binds 23S rRNA. One of the proteins that surrounds the polypeptide exit tunnel on the outside of the ribosome. Forms the main docking site for trigger factor binding to the ribosome. The polypeptide is Large ribosomal subunit protein uL23 (Ectopseudomonas mendocina (strain ymp) (Pseudomonas mendocina)).